The primary structure comprises 399 residues: MVFSSFPTYPDHSSNWQQQHQPITTTVGFTGNNINQQFLPHHPLPPQQQQTPPQLHHNNGNGGVAVPGGPGGLIRPGSMAERARLANIPLPETALKCPRCDSTNTKFCYFNNYSLTQPRHFCKACRRYWTRGGALRSVPVGGGCRRNKRTKNSSGGGGGSTSSGNSKSQDSATSNDQYHHRAMANNQMGPPSSSSSLSSLLSSYNAGLIPGHDHNSNNNNILGLGSSLPPLKLMPPLDFTDNFTLQYGAVSAPSYHIGGGSSGGAAALLNGFDQWRFPATNQLPLGGLDPFDQQHQMEQQNPGYGLVTGSGQYRPKNIFHNLISSSSSASSAMVTATASQLASVKMEDSNNQLNLSRQLFGDEQQLWNIHGAAAASTAAATSSWSEVSNNFSSSSTSNI.

The Dof-type zinc-finger motif lies at 95-149 (LKCPRCDSTNTKFCYFNNYSLTQPRHFCKACRRYWTRGGALRSVPVGGGCRRNKR). The Zn(2+) site is built by cysteine 97, cysteine 100, cysteine 122, and cysteine 125. The tract at residues 139–176 (PVGGGCRRNKRTKNSSGGGGGSTSSGNSKSQDSATSND) is disordered.

Expressed ubiquitously, especially in the vascular tissues, except in seeds, petals and anthers. Specific to the vascular tissues in young leaves, cotyledons and flower buds. The PEAR proteins (e.g. DOF2.4, DOF5.1, DOF3.2, DOF1.1, DOF5.6 and DOF5.3) form a short-range concentration gradient that peaks at protophloem sieve elements (PSE).

It localises to the nucleus. Transcription factor that binds specifically to a 5'-AA[AG]G-3' consensus core sequence. Binds to 5'-TAAAGT-3' motif in REV promoter to triggers its transcription, thus regulating adaxial-abaxial polarity and influencing leaf axial patterning in an auxin transport- and response-dependent manner (e.g. IAA6 and IAA19 genes expression). Probably involved in early processes for vascular development. The PEAR proteins (e.g. DOF2.4, DOF5.1, DOF3.2, DOF1.1, DOF5.6 and DOF5.3) activate gene expression that promotes radial growth of protophloem sieve elements. The sequence is that of Dof zinc finger protein DOF5.1 from Arabidopsis thaliana (Mouse-ear cress).